We begin with the raw amino-acid sequence, 98 residues long: Derivative of benzaldehyde biosynthesis cluster protein C (98 aa).

Belongs to the YciI family.

The protein operates within secondary metabolite biosynthesis. Part of the gene cluster that mediates the biosynthesis of the antibiotic 2,4-dihydroxy-3-methyl-6-(2-oxopropyl)benzaldehyde (DHMBA) and its derivatives. The direct non-reducing polyketide synthase dbaI product is 2,4-dihydroxy-3-methyl-6-(2-oxopropyl)benzaldehyde (DHMBA), produced by condensation of one acetyl-CoA starter unit with 4 malonyl-CoA units and one methylation step. The FAD-dependent monooxygenase dbaH is responsible for the synthesis of yellow pigments derived from the oxidation of DHMBA. The roles of dbaB, C, E and F have still to be determined. The protein is Derivative of benzaldehyde biosynthesis cluster protein C of Emericella nidulans (strain FGSC A4 / ATCC 38163 / CBS 112.46 / NRRL 194 / M139) (Aspergillus nidulans).